We begin with the raw amino-acid sequence, 211 residues long: Peroxiredoxin (211 aa).

Residues 2 to 156 (PLIGDKFPEM…IVRMIRAFRV (155 aa)) form the Thioredoxin domain. Catalysis depends on cysteine 44, which acts as the Cysteine sulfenic acid (-SOH) intermediate. Position 119 (arginine 119) interacts with substrate. A disulfide bridge links cysteine 198 with cysteine 204.

Belongs to the peroxiredoxin family. Prx6 subfamily. In terms of assembly, homodecamer. Pentamer of dimers that assemble into a ring structure.

Its subcellular location is the cytoplasm. The enzyme catalyses a hydroperoxide + [thioredoxin]-dithiol = an alcohol + [thioredoxin]-disulfide + H2O. Functionally, thiol-specific peroxidase that catalyzes the reduction of hydrogen peroxide and organic hydroperoxides to water and alcohols, respectively. Plays a role in cell protection against oxidative stress by detoxifying peroxides. The protein is Peroxiredoxin of Methanothermobacter marburgensis (strain ATCC BAA-927 / DSM 2133 / JCM 14651 / NBRC 100331 / OCM 82 / Marburg) (Methanobacterium thermoautotrophicum).